The chain runs to 143 residues: Small ribosomal subunit protein uS9 (143 aa).

The interval 123–143 (RPEPKKFGGRGARARFQKSYR) is disordered. Over residues 134-143 (ARARFQKSYR) the composition is skewed to basic residues.

This sequence belongs to the universal ribosomal protein uS9 family.

This chain is Small ribosomal subunit protein uS9 (RPS16), found in Eremothecium gossypii (strain ATCC 10895 / CBS 109.51 / FGSC 9923 / NRRL Y-1056) (Yeast).